The following is a 531-amino-acid chain: Apolipoprotein N-acyltransferase (531 aa).

The next 7 membrane-spanning stretches (helical) occupy residues 8–28 (IILL…LLAV), 34–54 (FGIF…IDGV), 69–89 (PAAI…WWLG), 105–125 (LAVV…VVIA), 136–156 (IAAL…VFTG), 178–198 (VVNL…PALI), and 207–227 (GLAI…YRLA). The CN hydrolase domain maps to 243–493 (VQPVIDQAKK…RGVLDTILPG (251 aa)). Catalysis depends on E287, which acts as the Proton acceptor. K351 is an active-site residue. The Nucleophile role is filled by C405. A helical membrane pass occupies residues 507-527 (IFWLSMAILSIVASFSRFGFN).

Belongs to the CN hydrolase family. Apolipoprotein N-acyltransferase subfamily.

The protein localises to the cell inner membrane. The catalysed reaction is N-terminal S-1,2-diacyl-sn-glyceryl-L-cysteinyl-[lipoprotein] + a glycerophospholipid = N-acyl-S-1,2-diacyl-sn-glyceryl-L-cysteinyl-[lipoprotein] + a 2-acyl-sn-glycero-3-phospholipid + H(+). It functions in the pathway protein modification; lipoprotein biosynthesis (N-acyl transfer). Its function is as follows. Catalyzes the phospholipid dependent N-acylation of the N-terminal cysteine of apolipoprotein, the last step in lipoprotein maturation. This Sinorhizobium medicae (strain WSM419) (Ensifer medicae) protein is Apolipoprotein N-acyltransferase.